The primary structure comprises 259 residues: Tryptophan synthase alpha chain (259 aa).

Active-site proton acceptor residues include E52 and D63.

Belongs to the TrpA family. As to quaternary structure, tetramer of two alpha and two beta chains.

The catalysed reaction is (1S,2R)-1-C-(indol-3-yl)glycerol 3-phosphate + L-serine = D-glyceraldehyde 3-phosphate + L-tryptophan + H2O. It functions in the pathway amino-acid biosynthesis; L-tryptophan biosynthesis; L-tryptophan from chorismate: step 5/5. Its function is as follows. The alpha subunit is responsible for the aldol cleavage of indoleglycerol phosphate to indole and glyceraldehyde 3-phosphate. In Streptococcus gordonii (strain Challis / ATCC 35105 / BCRC 15272 / CH1 / DL1 / V288), this protein is Tryptophan synthase alpha chain.